The primary structure comprises 225 residues: Probable iron export ATP-binding protein FetA (225 aa).

Residues Leu-8 to Ala-225 enclose the ABC transporter domain. Gly-40–Ser-47 provides a ligand contact to ATP.

Belongs to the ABC transporter superfamily. As to quaternary structure, the complex is composed of two ATP-binding proteins (FetA) and two transmembrane proteins (FetB).

The protein localises to the cell inner membrane. Functionally, part of the ABC transporter complex FetAB, which is probably involved in iron export and enhances resistance to H(2)O(2)-mediated oxidative stress. Probably responsible for energy coupling to the transport system. This Escherichia coli (strain K12) protein is Probable iron export ATP-binding protein FetA (fetA).